Here is an 87-residue protein sequence, read N- to C-terminus: ADLANGAKVFSGNCAACHMGGGNVVMANKTLKKEALEQFGMNSEDAIIYQVQHGKNAMPAFAGRLTDEQIQDVAAYVLDQAAKGWAG.

The heme c site is built by Cys-14, Cys-17, His-18, and Met-58.

It belongs to the cytochrome c family. PetJ subfamily. Monomer. Binds 1 heme c group covalently per subunit.

It is found in the cellular thylakoid lumen. Its function is as follows. Functions as an electron carrier between membrane-bound cytochrome b6-f and photosystem I in oxygenic photosynthesis. The protein is Cytochrome c6 (petJ) of Parathermosynechococcus lividus (Thermostichus lividus).